Consider the following 396-residue polypeptide: Argininosuccinate synthase (396 aa).

ATP contacts are provided by residues alanine 10–serine 18 and alanine 37. Positions 88 and 93 each coordinate L-citrulline. Glycine 118 provides a ligand contact to ATP. L-aspartate is bound by residues threonine 120, asparagine 124, and aspartate 125. An L-citrulline-binding site is contributed by asparagine 124. Residues arginine 128, serine 176, serine 185, glutamate 261, and tyrosine 273 each contribute to the L-citrulline site.

This sequence belongs to the argininosuccinate synthase family. Type 1 subfamily. As to quaternary structure, homotetramer.

It is found in the cytoplasm. The enzyme catalyses L-citrulline + L-aspartate + ATP = 2-(N(omega)-L-arginino)succinate + AMP + diphosphate + H(+). It participates in amino-acid biosynthesis; L-arginine biosynthesis; L-arginine from L-ornithine and carbamoyl phosphate: step 2/3. The chain is Argininosuccinate synthase from Nitratidesulfovibrio vulgaris (strain DP4) (Desulfovibrio vulgaris).